Here is a 367-residue protein sequence, read N- to C-terminus: Porin Omp2a (367 aa).

The first 22 residues, 1–22, serve as a signal peptide directing secretion; the sequence is MNIKSLLLGSAAALVAASGAQA.

It belongs to the alphaproteobacteria porin family. Monomer.

It is found in the cell outer membrane. Its function is as follows. Forms passive diffusion pores that allow small molecular weight hydrophilic materials across the outer membrane. The polypeptide is Porin Omp2a (omp2a) (Brucella melitensis biotype 1 (strain ATCC 23456 / CCUG 17765 / NCTC 10094 / 16M)).